A 310-amino-acid polypeptide reads, in one-letter code: UPF0324 membrane protein GSU2818 (310 aa).

9 helical membrane passes run 11 to 33 (FTILLALCATPWVGTAQALVMGI), 53 to 72 (MLLQASVVGLGFGLSLGEVI), 79 to 97 (IWYSVIGISCTLLVGYGLG), 107 to 129 (SALISFGTAICGGSAIAAMAPVL), 136 to 158 (TAVALATVFTLNSAALLLFPLVG), 193 to 215 (ALAIGTTVKLTRAIWIAPVVMAA), 227 to 244 (IPLFIIGFLGAAAIRTLL), 254 to 273 (LAGVAKQCLVVTLFLVGAGL), and 286 to 308 (LVQAVSLWVLVSALTLVALKLPW).

It belongs to the UPF0324 family.

The protein resides in the cell membrane. The polypeptide is UPF0324 membrane protein GSU2818 (Geobacter sulfurreducens (strain ATCC 51573 / DSM 12127 / PCA)).